Consider the following 311-residue polypeptide: Putative S-adenosyl-L-methionine-dependent methyltransferase MMAR_0358 (311 aa).

S-adenosyl-L-methionine-binding positions include aspartate 132 and 161–162 (DL).

The protein belongs to the UPF0677 family.

Functionally, exhibits S-adenosyl-L-methionine-dependent methyltransferase activity. This is Putative S-adenosyl-L-methionine-dependent methyltransferase MMAR_0358 from Mycobacterium marinum (strain ATCC BAA-535 / M).